A 97-amino-acid chain; its full sequence is Large ribosomal subunit protein uL23 (97 aa).

Belongs to the universal ribosomal protein uL23 family. In terms of assembly, part of the 50S ribosomal subunit. Contacts protein L29, and trigger factor when it is bound to the ribosome.

One of the early assembly proteins it binds 23S rRNA. One of the proteins that surrounds the polypeptide exit tunnel on the outside of the ribosome. Forms the main docking site for trigger factor binding to the ribosome. The sequence is that of Large ribosomal subunit protein uL23 from Anaeromyxobacter sp. (strain Fw109-5).